Reading from the N-terminus, the 328-residue chain is Putative GDP-L-fucose synthase 2 (328 aa).

A2 is modified (N-acetylalanine). 26-32 (GHRGLVG) is a binding site for NADP(+). Y152 serves as the catalytic Proton donor/acceptor. Residues K156, 179 to 182 (PTNL), and H195 contribute to the NADP(+) site. R203, W218, R225, and D285 together coordinate substrate.

The protein belongs to the NAD(P)-dependent epimerase/dehydratase family. Fucose synthase subfamily. Homodimer.

The enzyme catalyses GDP-beta-L-fucose + NADP(+) = GDP-4-dehydro-alpha-D-rhamnose + NADPH + H(+). It functions in the pathway nucleotide-sugar biosynthesis; GDP-L-fucose biosynthesis via de novo pathway; GDP-L-fucose from GDP-alpha-D-mannose: step 2/2. Its function is as follows. Catalyzes the two-step NADP-dependent conversion of GDP-4-dehydro-6-deoxy-D-mannose to GDP-fucose, involving an epimerase and a reductase reaction. The polypeptide is Putative GDP-L-fucose synthase 2 (GER2) (Arabidopsis thaliana (Mouse-ear cress)).